The primary structure comprises 520 residues: MTEISILNDVQKIIVLDYGSQYNQLIARRIREFGVFSELKSHKITAQELREINPIGIVLSGGPNSVYADNAFGIDPEIFELEIPILGICYGMQLITHKLGGKVVPAGQAGNREYGQSTLHLRETSKLFSGTPQEQLVLMSHGDAVTEIPEGFHLVGDSNDCPYAAIENTEKNLYGIQFHPEVRHSVYGNDILKNFAISICGARGDWSMDNFIDMEIAKIRETVGDRKVLLGLSGGVDSSVVGVLLQKAIGDQLTCIFVDHGLLRKDEGDQVMGMLGGKFGLNIIRVDASKRFLDLLADVEDPEKKRKIIGNEFVYVFDDEASKLKGVDFLAQGTLYTDIIESGTETAQTIKSHHNVGGLPEDMQFELIEPLNTLFKDEVRALGIALGMPEEIVWRQPFPGPGLAIRVMGAITEEKLETVRESDAILREEIAKAGLDRDVWQYFTVNTGVRSVGVMGDGRTYDYTIAIRAITSIDGMTADFAQLPWDVLKKISTRIVNEVDHVNRIVYDITSKPPATVEWE.

A Glutamine amidotransferase type-1 domain is found at 12–205; sequence KIIVLDYGSQ…AISICGARGD (194 aa). C89 functions as the Nucleophile in the catalytic mechanism. Residues H179 and E181 contribute to the active site. The 190-residue stretch at 206–395 folds into the GMPS ATP-PPase domain; it reads WSMDNFIDME…LGMPEEIVWR (190 aa). An ATP-binding site is contributed by 233–239; sequence SGGVDSS.

In terms of assembly, homodimer.

The enzyme catalyses XMP + L-glutamine + ATP + H2O = GMP + L-glutamate + AMP + diphosphate + 2 H(+). It participates in purine metabolism; GMP biosynthesis; GMP from XMP (L-Gln route): step 1/1. In terms of biological role, catalyzes the synthesis of GMP from XMP. The protein is GMP synthase [glutamine-hydrolyzing] of Streptococcus pyogenes serotype M5 (strain Manfredo).